We begin with the raw amino-acid sequence, 365 residues long: Validamycin A dioxygenase (365 aa).

In terms of domain architecture, Fe2OG dioxygenase spans 174–284 (HATWTQSVNW…LVSLVYFFDA (111 aa)). Histidine 203, aspartate 205, and histidine 261 together coordinate Fe cation. Positions 331–365 (GELSLSRPGSADSPGSSPADDHPSRPGRHPAQGPQ) are disordered. Residues 336–348 (SRPGSADSPGSSP) are compositionally biased toward low complexity.

The protein belongs to the iron/ascorbate-dependent oxidoreductase family. The cofactor is Fe(2+).

It carries out the reaction validamycin A + 2-oxoglutarate + O2 = validamycin B + succinate + CO2 + H(+). It catalyses the reaction validoxylamine A + 2-oxoglutarate + O2 = validoxylamine B + succinate + CO2 + H(+). The protein operates within antibiotic biosynthesis. Functionally, involved in the biosynthesis of validamycin B, a component of the antifungal and antibiotic validamycin complex used as a crop protectant. Catalyzes the regioselective hydroxylation of validamycin A (4-O-beta-D-glucopyranosyl-validoxylamine A) at the C-6 position to yield validamycin B. To a lesser extent, also able to convert validoxylamine A to its hydroxylated derivative. This chain is Validamycin A dioxygenase, found in Streptomyces hygroscopicus subsp. limoneus.